The chain runs to 294 residues: ATP synthase gamma chain (294 aa).

Belongs to the ATPase gamma chain family. F-type ATPases have 2 components, CF(1) - the catalytic core - and CF(0) - the membrane proton channel. CF(1) has five subunits: alpha(3), beta(3), gamma(1), delta(1), epsilon(1). CF(0) has three main subunits: a, b and c.

The protein localises to the cell inner membrane. Produces ATP from ADP in the presence of a proton gradient across the membrane. The gamma chain is believed to be important in regulating ATPase activity and the flow of protons through the CF(0) complex. The chain is ATP synthase gamma chain from Campylobacter jejuni subsp. jejuni serotype O:23/36 (strain 81-176).